A 291-amino-acid polypeptide reads, in one-letter code: uncharacterized protein (291 aa).

The HTH lysR-type domain occupies 1–58; the sequence is MDLKWLQTFIAAAESESFREAAEHLYLTQPAVSQHMRKLEDELDMRLFLHSGRRVVLT. The H-T-H motif DNA-binding region spans 18-37; that stretch reads FREAAEHLYLTQPAVSQHMR.

This sequence belongs to the LysR transcriptional regulatory family.

This is an uncharacterized protein from Bacillus subtilis (strain 168).